A 154-amino-acid polypeptide reads, in one-letter code: Myoglobin (154 aa).

The region spanning 2–148 is the Globin domain; that stretch reads VLSDGEWQLV…FRKDIAAKYK (147 aa). Phosphoserine is present on Ser4. His65 is a binding site for nitrite. His65 contributes to the O2 binding site. Thr68 is modified (phosphothreonine). His94 lines the heme b pocket.

This sequence belongs to the globin family. As to quaternary structure, monomeric.

Its subcellular location is the cytoplasm. It is found in the sarcoplasm. The enzyme catalyses Fe(III)-heme b-[protein] + nitric oxide + H2O = Fe(II)-heme b-[protein] + nitrite + 2 H(+). It catalyses the reaction H2O2 + AH2 = A + 2 H2O. In terms of biological role, monomeric heme protein which primary function is to store oxygen and facilitate its diffusion within muscle tissues. Reversibly binds oxygen through a pentacoordinated heme iron and enables its timely and efficient release as needed during periods of heightened demand. Depending on the oxidative conditions of tissues and cells, and in addition to its ability to bind oxygen, it also has a nitrite reductase activity whereby it regulates the production of bioactive nitric oxide. Under stress conditions, like hypoxia and anoxia, it also protects cells against reactive oxygen species thanks to its pseudoperoxidase activity. This chain is Myoglobin, found in Balaena mysticetus (Bowhead whale).